The primary structure comprises 1071 residues: ATP-dependent helicase/deoxyribonuclease subunit B (1071 aa).

It belongs to the helicase family. AddB/RexB type 2 subfamily. Heterodimer of AddA and RexB. Mg(2+) is required as a cofactor.

Its function is as follows. The heterodimer acts as both an ATP-dependent DNA helicase and an ATP-dependent, dual-direction single-stranded exonuclease. Recognizes the chi site generating a DNA molecule suitable for the initiation of homologous recombination. This subunit has 5' -&gt; 3' nuclease activity but not helicase activity. The protein is ATP-dependent helicase/deoxyribonuclease subunit B of Streptococcus pyogenes serotype M18 (strain MGAS8232).